Reading from the N-terminus, the 470-residue chain is Poly(A) polymerase catalytic subunit (470 aa).

Active-site residues include aspartate 192 and aspartate 194.

It belongs to the poxviridae poly(A) polymerase catalytic subunit family. In terms of assembly, heterodimer of a large (catalytic) subunit and a small (regulatory) subunit.

It carries out the reaction RNA(n) + ATP = RNA(n)-3'-adenine ribonucleotide + diphosphate. Functionally, polymerase that creates the 3'-poly(A) tail of mRNA's. This chain is Poly(A) polymerase catalytic subunit (PAPL), found in Molluscum contagiosum virus subtype 1 (MOCV).